We begin with the raw amino-acid sequence, 392 residues long: Proteasome-activating nucleotidase (392 aa).

Residues 19-53 adopt a coiled-coil conformation; that stretch reads IVRLLEEKIESLTKELEKLRQDLNWYKGELEKLLA. ATP contacts are provided by residues 178-183 and Tyr-317; that span reads GTGKTL. The interval 390-392 is docks into pockets in the proteasome alpha-ring to cause gate opening; it reads KYV.

Belongs to the AAA ATPase family. As to quaternary structure, homohexamer. The hexameric complex has a two-ring architecture resembling a top hat that caps the 20S proteasome core at one or both ends. Upon ATP-binding, the C-terminus of PAN interacts with the alpha-rings of the proteasome core by binding to the intersubunit pockets.

The protein localises to the cytoplasm. Functionally, ATPase which is responsible for recognizing, binding, unfolding and translocation of substrate proteins into the archaeal 20S proteasome core particle. Is essential for opening the gate of the 20S proteasome via an interaction with its C-terminus, thereby allowing substrate entry and access to the site of proteolysis. Thus, the C-termini of the proteasomal ATPase function like a 'key in a lock' to induce gate opening and therefore regulate proteolysis. Unfolding activity requires energy from ATP hydrolysis, whereas ATP binding alone promotes ATPase-20S proteasome association which triggers gate opening, and supports translocation of unfolded substrates. The protein is Proteasome-activating nucleotidase of Sulfurisphaera tokodaii (strain DSM 16993 / JCM 10545 / NBRC 100140 / 7) (Sulfolobus tokodaii).